Consider the following 331-residue polypeptide: Glyoxylate reductase (331 aa).

NADP(+) is bound by residues 158 to 161 (FGRI), 180 to 182 (SRT), and 239 to 241 (TSR). Residues Arg-241 and Glu-270 contribute to the active site. The active-site Proton donor is His-288. Position 288 to 290 (288 to 290 (HIG)) interacts with NADP(+).

It belongs to the D-isomer specific 2-hydroxyacid dehydrogenase family. GyaR subfamily. In terms of assembly, homodimer.

Its subcellular location is the cytoplasm. It carries out the reaction glycolate + NAD(+) = glyoxylate + NADH + H(+). The sequence is that of Glyoxylate reductase from Thermococcus litoralis (strain ATCC 51850 / DSM 5473 / JCM 8560 / NS-C).